The primary structure comprises 413 residues: uncharacterized protein (413 aa).

The chain crosses the membrane as a helical span at residues Ile-25–Thr-47.

It localises to the host membrane. This is an uncharacterized protein from Acidianus sp. F28 (AFV-2).